A 374-amino-acid chain; its full sequence is MKAFDKEELTIIRKFEHIEHCLKRNVQAHVSNGFEDVHFVHMSLPEIDKDEIDLSVEFLGRKFDYPIMIAGMTGGTKGSQLAGKINKTLAKAAQELNIPMGVGSQRAMIRKPETWESYYVRDVAPDVFLVGNLGAPQFAETMPDRYGIEEALKAVETIQADALAIHMNPLQESVQPEGDTQYRGVLKALAELKAEFPYPIIAKETGAGVSMEVAIRLESIGIDAIDVGGLGGTSWSGVEYYRAKDELGRNLALKFWDWGIKTAISVAEVRYATELPIIATGGMRDGIAMAKALAMGATFAGVALPLLRPAVKGDVEGVIKVLERYIEEIRNTMFLVGARNVEELRKVPLVITGFTREWLEQRIDLPVYLRDRRI.

Residue Arg-13 to Lys-14 participates in substrate binding. FMN-binding positions include Gly-71–Thr-73, Ser-104, and Asn-132. Ser-104–Arg-106 is a binding site for substrate. Gln-171 contacts substrate. Residue Glu-172 coordinates Mg(2+). Residues Lys-203, Thr-233, Gly-282–Arg-284, and Ala-303–Leu-304 each bind FMN.

Belongs to the IPP isomerase type 2 family. Homooctamer. Dimer of tetramers. Requires FMN as cofactor. NADPH serves as cofactor. Mg(2+) is required as a cofactor.

The protein resides in the cytoplasm. The enzyme catalyses isopentenyl diphosphate = dimethylallyl diphosphate. Its function is as follows. Involved in the biosynthesis of isoprenoids. Catalyzes the 1,3-allylic rearrangement of the homoallylic substrate isopentenyl (IPP) to its allylic isomer, dimethylallyl diphosphate (DMAPP). This is Isopentenyl-diphosphate delta-isomerase from Thermococcus onnurineus (strain NA1).